Reading from the N-terminus, the 186-residue chain is GTP-dependent dephospho-CoA kinase (186 aa).

Residues D43, I44, V45, D62, E120, and D143 each coordinate GTP.

Belongs to the GTP-dependent DPCK family.

It carries out the reaction 3'-dephospho-CoA + GTP = GDP + CoA + H(+). Its pathway is cofactor biosynthesis; coenzyme A biosynthesis. In terms of biological role, catalyzes the GTP-dependent phosphorylation of the 3'-hydroxyl group of dephosphocoenzyme A to form coenzyme A (CoA). In Haloquadratum walsbyi (strain DSM 16790 / HBSQ001), this protein is GTP-dependent dephospho-CoA kinase.